The primary structure comprises 172 residues: NAD(P)H-quinone oxidoreductase subunit J (172 aa).

Belongs to the complex I 30 kDa subunit family. NDH-1 can be composed of about 15 different subunits; different subcomplexes with different compositions have been identified which probably have different functions.

It localises to the cellular thylakoid membrane. The catalysed reaction is a plastoquinone + NADH + (n+1) H(+)(in) = a plastoquinol + NAD(+) + n H(+)(out). The enzyme catalyses a plastoquinone + NADPH + (n+1) H(+)(in) = a plastoquinol + NADP(+) + n H(+)(out). Its function is as follows. NDH-1 shuttles electrons from an unknown electron donor, via FMN and iron-sulfur (Fe-S) centers, to quinones in the respiratory and/or the photosynthetic chain. The immediate electron acceptor for the enzyme in this species is believed to be plastoquinone. Couples the redox reaction to proton translocation, and thus conserves the redox energy in a proton gradient. Cyanobacterial NDH-1 also plays a role in inorganic carbon-concentration. The protein is NAD(P)H-quinone oxidoreductase subunit J of Synechococcus elongatus (strain ATCC 33912 / PCC 7942 / FACHB-805) (Anacystis nidulans R2).